A 507-amino-acid chain; its full sequence is Hexokinase-5 (507 aa).

A helical membrane pass occupies residues 4-24 (AAAVGTAVVVAAAVGVAVVLA). The 455-residue stretch at 44-498 (RKVAAVIEDV…SGIGAALLAA (455 aa)) folds into the Hexokinase domain. Positions 99 to 237 (TGNEQGLFYA…GLDMKIAALV (139 aa)) are hexokinase small subdomain. Residues Gly-113, Thr-114, and Asn-115 each contribute to the ADP site. D-glucose is bound by residues Thr-203, Lys-204, Asn-238, and Asp-239. A hexokinase large subdomain region spans residues 238 to 487 (NDTVGTLAGG…SSVVTKLAND (250 aa)). ADP is bound at residue Thr-262. Positions 265, 293, and 324 each coordinate D-glucose. Gly-452 is a binding site for ADP.

Belongs to the hexokinase family. As to expression, expressed in roots, leaves, flowers, immature seeds, endosperm and seed coat.

It localises to the plastid. The protein localises to the chloroplast outer membrane. The catalysed reaction is a D-hexose + ATP = a D-hexose 6-phosphate + ADP + H(+). It carries out the reaction D-fructose + ATP = D-fructose 6-phosphate + ADP + H(+). The enzyme catalyses D-glucose + ATP = D-glucose 6-phosphate + ADP + H(+). The protein operates within carbohydrate metabolism; hexose metabolism. It participates in carbohydrate degradation; glycolysis; D-glyceraldehyde 3-phosphate and glycerone phosphate from D-glucose: step 1/4. Its function is as follows. Fructose and glucose phosphorylating enzyme. Functions as a glucose sensor for plant growth and photosynthesis. Is essential for pollen development, germination, and tube growth. Its activity is necessary for the starch utilization pathway during pollen germination and tube growth, as well as for starch biosynthesis during pollen maturation. The chain is Hexokinase-5 (HXK5) from Oryza sativa subsp. japonica (Rice).